Consider the following 904-residue polypeptide: Trichohyalin-like protein 1 (904 aa).

The 36-residue stretch at 48-83 (CVLHAVEKNSNLLNIDSNGIISFDEFVLAIFNLLNL) folds into the EF-hand domain. 2 disordered regions span residues 102 to 792 (PEKE…CSVE) and 858 to 890 (PYTR…HPQR). The segment covering 113–128 (QATTGDGQWTVGTSPT) has biased composition (polar residues). Composition is skewed to basic and acidic residues over residues 172 to 185 (ASEH…HLEG), 222 to 240 (TERK…EPAR), 268 to 300 (ATQR…DEPS), 349 to 371 (NLGE…ETKD), and 385 to 398 (SDMR…RGPE). Polar residues predominate over residues 443-452 (ETQYLSSEGG). A compositionally biased stretch (acidic residues) spans 524–536 (VEEEDGYQGEDPE). Positions 538 to 554 (PFTQSDEGSSETPNSLA) are enriched in polar residues. Low complexity predominate over residues 555–578 (SEEGNSSSETGELPVQGDSQSQGD). Over residues 586–598 (GGHNNNPDTQRQG) the composition is skewed to polar residues. Over residues 759–770 (GDQKSPAKKEHN) the composition is skewed to basic and acidic residues. Residues 771–780 (SSVPWSSLEK) show a composition bias toward polar residues. A compositionally biased stretch (basic and acidic residues) spans 881 to 890 (LEDKQGHPQR).

It belongs to the S-100 family.

In Homo sapiens (Human), this protein is Trichohyalin-like protein 1 (TCHHL1).